A 254-amino-acid chain; its full sequence is Chymotrypsin-like serine proteinase (254 aa).

Positions 1–18 (MNALLNILLCTLAATALA) are cleaved as a signal peptide. A propeptide spans 19 to 23 (EISPN) (activation peptide). The Peptidase S1 domain maps to 24-254 (IVGGSNAAAG…SSFYNWVQTQ (231 aa)). A disulfide bridge links Cys-53 with Cys-69. Residues His-68 and Asp-117 each act as charge relay system in the active site. Cystine bridges form between Cys-146–Cys-218, Cys-181–Cys-199, and Cys-208–Cys-233. The active-site Charge relay system is the Ser-212.

The protein belongs to the peptidase S1 family. In terms of assembly, monomer. In terms of tissue distribution, expressed specifically in the distal quarter of the intestine.

The protein localises to the secreted. It localises to the extracellular space. Activated by an autocatalytic mechanism. Its function is as follows. Specificity similar to chymotrypsin. The chain is Chymotrypsin-like serine proteinase from Haliotis rufescens (California red abalone).